The following is a 137-amino-acid chain: Putative pre-16S rRNA nuclease (137 aa).

The protein belongs to the YqgF nuclease family.

It is found in the cytoplasm. Could be a nuclease involved in processing of the 5'-end of pre-16S rRNA. This Bacillus cytotoxicus (strain DSM 22905 / CIP 110041 / 391-98 / NVH 391-98) protein is Putative pre-16S rRNA nuclease.